We begin with the raw amino-acid sequence, 150 residues long: 3-dehydroquinate dehydratase (150 aa).

The Proton acceptor role is filled by Y26. Residues N75, H81, and D88 each coordinate substrate. The Proton donor role is filled by H101. Residues 102–103 (LS) and R112 each bind substrate.

Belongs to the type-II 3-dehydroquinase family. Homododecamer.

The enzyme catalyses 3-dehydroquinate = 3-dehydroshikimate + H2O. The protein operates within metabolic intermediate biosynthesis; chorismate biosynthesis; chorismate from D-erythrose 4-phosphate and phosphoenolpyruvate: step 3/7. Functionally, catalyzes a trans-dehydration via an enolate intermediate. In Shewanella loihica (strain ATCC BAA-1088 / PV-4), this protein is 3-dehydroquinate dehydratase.